The chain runs to 715 residues: MDSDDDGDRRRDKFARERRDDDSYRRSGGGGGGYSRYDNKRPAGRREDYQVKRSRGDEGDDGFDPVRGDRNGNGAEPSSENSIYSGPLLPFKRFLTNQEDDISEEDAIKKYNEYKNEHRKFQLDRFFRAHKDEEWFRLKYKPEEAKKVKEVQLENVQKRLQIFNELKEQGQFDKFTLDFEDAEAILRMLDSVVVKLENGSEDDLKAVLAQKLDDESLADVKKENKDAAEKVEDQVKDEVKEEPNEEQEEGAIDDETDKASNKVNIHKTCSVFLRNIPPGLTYEELESTCKKYPGFLRLALTDGIAERRFYRRGWATFKRDVNIKEICWGLNAHRLRETDLNAIINRDITRRVRTNNGVAAHKQVALNDLKLAVKLTALYDKKLGLFNAADESESDREKDIRMGVDLVAASTNPLVKEIKSIVPKDTLNDISEEEAELLGVSNGGDSQSDKVRYERDDTILKALDLLIIYLRIVHSIDFYNHGHYAQEDSMPNRCGLIHVRGQPPSGASINTDENGDLIVPQKFINDFISGFNSRIDKGLIEKQYVSEEDMEKMGKKDGEKEVEAFIAINTVELAKDKWLCPLSGKKFKGPEFIRKHLQSKHEDKLEEARAEADFFNNYLADAQRPVDLEPKHMPHMSRDDHRGGGGDRGYGRERDDDRGPGGGRSSFGNGSYDRRPPFPPRHSLGGRGGGGRMFDDAPRRQPVSYRDLDAPDDIP.

Disordered stretches follow at residues 1–87, 223–259, and 629–715; these read MDSD…YSGP, ENKD…TDKA, and EPKH…DDIP. Composition is skewed to basic and acidic residues over residues 7 to 25, 37 to 57, and 223 to 242; these read GDRR…DSYR, YDNK…SRGD, and ENKD…VKEE. The segment covering 243 to 256 has biased composition (acidic residues); the sequence is PNEEQEEGAIDDET. Over residues 629–659 the composition is skewed to basic and acidic residues; the sequence is EPKHMPHMSRDDHRGGGGDRGYGRERDDDRG.

Belongs to the ARS2 family.

The protein localises to the nucleus. Acts as a mediator between the cap-binding complex (CBC) and the primary microRNAs (miRNAs) processing machinery. Contributes to the stability and delivery of capped primary miRNA transcripts to the primary miRNA processing complex, thereby playing a role in RNA-mediated gene silencing (RNAi) by miRNAs. The protein is Serrate RNA effector molecule homolog of Caenorhabditis briggsae.